A 245-amino-acid chain; its full sequence is 14-3-3 protein zeta/delta (245 aa).

N-acetylmethionine is present on Met1. At Lys3 the chain carries N6-acetyllysine. At Ser58 the chain carries Phosphoserine; by PKA. Lys68 carries the post-translational modification N6-acetyllysine. Phosphoserine occurs at positions 184, 207, and 210. Thr232 carries the phosphothreonine; by CK1 modification.

This sequence belongs to the 14-3-3 family. As to quaternary structure, homodimer. Heterodimerizes with YWHAE. Homo- and heterodimerization is inhibited by phosphorylation on Ser-58. Interacts with FOXO4, NOXA1, SSH1 ARHGEF2, CDK16 and BSPRY. Interacts with WEE1 (C-terminal). Interacts with MLF1 (phosphorylated form); the interaction retains it in the cytoplasm. Interacts with BAX; the interaction occurs in the cytoplasm. Under stress conditions, MAPK8-mediated phosphorylation releases BAX to mitochondria. Interacts with TP53; the interaction enhances p53 transcriptional activity. The Ser-58 phosphorylated form inhibits this interaction and p53 transcriptional activity. Interacts with ABL1 (phosphorylated form); the interaction retains ABL1 in the cytoplasm. Interacts with PKA-phosphorylated AANAT; the interaction modulates AANAT enzymatic activity by increasing affinity for arylalkylamines and acetyl-CoA and protecting the enzyme from dephosphorylation and proteasomal degradation. It may also prevent thiol-dependent inactivation. Interacts with AKT1; the interaction phosphorylates YWHAZ and modulates dimerization. Interacts with GAB2. Interacts with BCL2L11, SAMSN1 and TLK2. Interacts with phosphorylated RAF1; the interaction is inhibited when YWHAZ is phosphorylated on Thr-232. Interacts with Thr-phosphorylated ITGB2. Interacts with the 'Thr-369' phosphorylated form of DAPK2. Interacts with PI4KB, TBC1D22A and TBC1D22B. Interacts with ZFP36L1 (via phosphorylated form); this interaction occurs in a p38 MAPK- and AKT-signaling pathways. Interacts with SLITRK1. Interacts with AK5, LDB1, MADD, MARK3, PDE1A and SMARCB1. Interacts with YWHAZ. Interacts with MEFV. Interacts with ADAM22 (via C-terminus). Post-translationally, the delta, brain-specific form differs from the zeta form in being phosphorylated. Phosphorylation on Ser-184 by MAPK8; promotes dissociation of BAX and translocation of BAX to mitochondria. Phosphorylation on Thr-232; inhibits binding of RAF1. Phosphorylated on Ser-58 by PKA and protein kinase C delta type catalytic subunit in a sphingosine-dependent fashion. Phosphorylation on Ser-58 by PKA; disrupts homodimerization and heterodimerization with YHAE and TP53.

The protein resides in the cytoplasm. It localises to the melanosome. Functionally, adapter protein implicated in the regulation of a large spectrum of both general and specialized signaling pathways. Binds to a large number of partners, usually by recognition of a phosphoserine or phosphothreonine motif. Binding generally results in the modulation of the activity of the binding partner. Promotes cytosolic retention and inactivation of TFEB transcription factor by binding to phosphorylated TFEB. Induces ARHGEF7 activity on RAC1 as well as lamellipodia and membrane ruffle formation. In neurons, regulates spine maturation through the modulation of ARHGEF7 activity. The chain is 14-3-3 protein zeta/delta (YWHAZ) from Bos taurus (Bovine).